The chain runs to 59 residues: Large ribosomal subunit protein bL32 (59 aa).

The tract at residues 1–59 (MAVQQNRKTRSKRGMRRSHDALSAAALSTDATTGEVHRRHHVSPDGFYRGKQVVEARDE) is disordered. Residues 7 to 16 (RKTRSKRGMR) are compositionally biased toward basic residues. The segment covering 21–33 (ALSAAALSTDATT) has biased composition (low complexity).

This sequence belongs to the bacterial ribosomal protein bL32 family.

The sequence is that of Large ribosomal subunit protein bL32 from Marinobacter nauticus (strain ATCC 700491 / DSM 11845 / VT8) (Marinobacter aquaeolei).